The chain runs to 289 residues: Acetyl-coenzyme A carboxylase carboxyl transferase subunit beta (289 aa).

Residues 28–289 form the CoA carboxyltransferase N-terminal domain; it reads VMTKCPKCKK…QGGEMAVWQS (262 aa). Residues Cys32, Cys35, Cys51, and Cys54 each contribute to the Zn(2+) site. The C4-type zinc finger occupies 32 to 54; sequence CPKCKKIMYTKEVLKNLKVCVNC.

The protein belongs to the AccD/PCCB family. As to quaternary structure, acetyl-CoA carboxylase is a heterohexamer composed of biotin carboxyl carrier protein (AccB), biotin carboxylase (AccC) and two subunits each of ACCase subunit alpha (AccA) and ACCase subunit beta (AccD). Zn(2+) is required as a cofactor.

It is found in the cytoplasm. The enzyme catalyses N(6)-carboxybiotinyl-L-lysyl-[protein] + acetyl-CoA = N(6)-biotinyl-L-lysyl-[protein] + malonyl-CoA. Its pathway is lipid metabolism; malonyl-CoA biosynthesis; malonyl-CoA from acetyl-CoA: step 1/1. In terms of biological role, component of the acetyl coenzyme A carboxylase (ACC) complex. Biotin carboxylase (BC) catalyzes the carboxylation of biotin on its carrier protein (BCCP) and then the CO(2) group is transferred by the transcarboxylase to acetyl-CoA to form malonyl-CoA. The chain is Acetyl-coenzyme A carboxylase carboxyl transferase subunit beta from Bacillus thuringiensis subsp. konkukian (strain 97-27).